The following is a 429-amino-acid chain: Threonine synthase (429 aa).

N6-(pyridoxal phosphate)lysine is present on Lys-107.

The protein belongs to the threonine synthase family. The cofactor is pyridoxal 5'-phosphate.

The catalysed reaction is O-phospho-L-homoserine + H2O = L-threonine + phosphate. It participates in amino-acid biosynthesis; L-threonine biosynthesis; L-threonine from L-aspartate: step 5/5. Its function is as follows. Catalyzes the gamma-elimination of phosphate from L-phosphohomoserine and the beta-addition of water to produce L-threonine. In Serratia marcescens, this protein is Threonine synthase (thrC).